Reading from the N-terminus, the 295-residue chain is Sulfotransferase 1A1 (295 aa).

48–53 contributes to the 3'-phosphoadenylyl sulfate binding site; that stretch reads KSGTTW. 106-108 serves as a coordination point for substrate; it reads KTH. His108 (proton acceptor) is an active-site residue. Residues Arg130, Ser138, Tyr193, 227–232, and 255–259 contribute to the 3'-phosphoadenylyl sulfate site; these read TSFKEM and FMRKG. Ser138 is subject to Phosphoserine.

The protein belongs to the sulfotransferase 1 family. In terms of assembly, homodimer. In terms of tissue distribution, liver, lung, adrenal, brain, platelets and skin.

It localises to the cytoplasm. The catalysed reaction is a phenol + 3'-phosphoadenylyl sulfate = an aryl sulfate + adenosine 3',5'-bisphosphate + H(+). It carries out the reaction 17beta-estradiol + 3'-phosphoadenylyl sulfate = 17beta-estradiol 3-sulfate + adenosine 3',5'-bisphosphate + H(+). The enzyme catalyses 4-ethylphenol + 3'-phosphoadenylyl sulfate = 4-ethylphenyl sulfate + adenosine 3',5'-bisphosphate + H(+). It catalyses the reaction 4-nitrophenol + 3'-phosphoadenylyl sulfate = 4-nitrophenyl sulfate + adenosine 3',5'-bisphosphate. The catalysed reaction is dopamine + 3'-phosphoadenylyl sulfate = dopamine 3-O-sulfate + adenosine 3',5'-bisphosphate + H(+). It carries out the reaction dopamine + 3'-phosphoadenylyl sulfate = dopamine 4-O-sulfate + adenosine 3',5'-bisphosphate + H(+). The enzyme catalyses 3,3',5-triiodo-L-thyronine + 3'-phosphoadenylyl sulfate = 3,3',5-triiodo-L-thyronine sulfate + adenosine 3',5'-bisphosphate + H(+). It catalyses the reaction 3,3',5'-triiodo-L-thyronine + 3'-phosphoadenylyl sulfate = 3,3',5'-triiodo-L-thyronine sulfate + adenosine 3',5'-bisphosphate + H(+). The catalysed reaction is 3,3'-diiodo-L-thyronine + 3'-phosphoadenylyl sulfate = 3,3'-diiodo-L-thyronine sulfate + adenosine 3',5'-bisphosphate + H(+). It carries out the reaction L-thyroxine + 3'-phosphoadenylyl sulfate = L-thyroxine sulfate + adenosine 3',5'-bisphosphate + H(+). In terms of biological role, sulfotransferase that utilizes 3'-phospho-5'-adenylyl sulfate (PAPS) as sulfonate donor to catalyze the sulfate conjugation of a wide variety of acceptor molecules bearing a hydroxyl or an amine group. Sulfonation increases the water solubility of most compounds, and therefore their renal excretion, but it can also result in bioactivation to form active metabolites. Displays broad substrate specificity for small phenolic compounds. Plays an important role in the sulfonation of endogenous molecules such as steroid hormones. Mediates the sulfate conjugation of a variety of xenobiotics, including the drugs acetaminophen and minoxidil. Mediates also the metabolic activation of carcinogenic N-hydroxyarylamines leading to highly reactive intermediates capable of forming DNA adducts, potentially resulting in mutagenesis. May play a role in gut microbiota-host metabolic interaction. O-sulfonates 4-ethylphenol (4-EP), a dietary tyrosine-derived metabolite produced by gut bacteria. The product 4-EPS crosses the blood-brain barrier and may negatively regulate oligodendrocyte maturation and myelination, affecting the functional connectivity of different brain regions associated with the limbic system. Catalyzes the sulfate conjugation of dopamine. Catalyzes the sulfation of T4 (L-thyroxine/3,5,3',5'-tetraiodothyronine), T3 (3,5,3'-triiodothyronine), rT3 (3,3',5'-triiodothyronine) and 3,3'-T2 (3,3'-diiodothyronine), with a substrate preference of 3,3'-T2 &gt; rT3 &gt; T3 &gt; T4. The protein is Sulfotransferase 1A1 (SULT1A1) of Homo sapiens (Human).